The sequence spans 144 residues: Cytochrome c-type biogenesis protein CcmE (144 aa).

Residues 1-7 are Cytoplasmic-facing; the sequence is MKPRHKR. The chain crosses the membrane as a helical; Signal-anchor for type II membrane protein span at residues 8–28; it reads ALMIVAALAVIGIAALLILNA. The Extracellular segment spans residues 29–144; sequence LNSNIALYVT…EQAQKNGSAK (116 aa). 2 residues coordinate heme: H121 and Y125.

The protein belongs to the CcmE/CycJ family.

It is found in the cell membrane. Functionally, heme chaperone required for the biogenesis of c-type cytochromes. Transiently binds heme delivered by CcmC and transfers the heme to apo-cytochromes in a process facilitated by CcmF and CcmH. The protein is Cytochrome c-type biogenesis protein CcmE of Polynucleobacter asymbioticus (strain DSM 18221 / CIP 109841 / QLW-P1DMWA-1) (Polynucleobacter necessarius subsp. asymbioticus).